The chain runs to 193 residues: Signal peptidase I T (193 aa).

The Cytoplasmic segment spans residues 1–25 (MTEEKNTNTEKTAKKKTNTYLEWGK). The helical transmembrane segment at 26-42 (AIVIAVLLALLIRHFLF) threads the bilayer. At 43–193 (EPYLVEGSSM…FPFNEMRQTK (151 aa)) the chain is on the extracellular side. Catalysis depends on residues S51 and K93.

It belongs to the peptidase S26 family.

It localises to the cell membrane. The catalysed reaction is Cleavage of hydrophobic, N-terminal signal or leader sequences from secreted and periplasmic proteins.. The protein is Signal peptidase I T (sipT) of Bacillus subtilis (strain 168).